Here is a 142-residue protein sequence, read N- to C-terminus: Hemoglobin subunit alpha-2 (142 aa).

The 141-residue stretch at 2 to 142 folds into the Globin domain; that stretch reads VLSPADKTNV…VSTVLTSKYR (141 aa). H59 contacts O2. H88 provides a ligand contact to heme b.

This sequence belongs to the globin family. Heterotetramer of two alpha chains and two beta chains. As to expression, red blood cells.

Involved in oxygen transport from the lung to the various peripheral tissues. The sequence is that of Hemoglobin subunit alpha-2 from Arctocephalus galapagoensis (Galapagoes fur seal).